We begin with the raw amino-acid sequence, 135 residues long: Large ribosomal subunit protein bL21 (135 aa).

The interval 85–135 is disordered; that stretch reads YRVKRGHRQQYTQIEIESLNANGPASSDDEEAAETSDAEPDEDPEAEPAEA. Over residues 93–107 the composition is skewed to polar residues; sequence QQYTQIEIESLNANG. Over residues 111-135 the composition is skewed to acidic residues; sequence SDDEEAAETSDAEPDEDPEAEPAEA.

This sequence belongs to the bacterial ribosomal protein bL21 family. In terms of assembly, part of the 50S ribosomal subunit. Contacts protein L20.

In terms of biological role, this protein binds to 23S rRNA in the presence of protein L20. The chain is Large ribosomal subunit protein bL21 from Salinibacter ruber (strain DSM 13855 / M31).